The sequence spans 539 residues: MTEPWIAFPPEVHSAMLNYGAGVGPMLISATQNGELSAQYAEAASEVEELLGVVASEGWQGQAAEAFVAAYMPFLAWLIQASADCVEMAAQQHVVIEAYTAAVELMPTQVELAANQIKLAVLVATNFFGINTIPIAINEAEYVEMWVRAATTMATYSTVSRSALSAMPHTSPPPLILKSDELLPDTGEDSDEDGHNHGGHSHGGHARMIDNFFAEILRGVSAGRIVWDPVNGTLNGLDYDDYVYPGHAIWWLARGLEFFQDGEQFGELLFTNPTGAFQFLLYVVVVDLPTHIAQIATWLGQYPQLLSAALTGVIAHLGAITGLAGLSGLSAIPSAAIPAVVPELTPVAAAPPMLAVAGVGPAVAAPGMLPASAPAPAAAAGATAAGPTPPATGFGGFPPYLVGGGGPGIGFGSGQSAHAKAAASDSAAAESAAQASARAQARAARRGRSAAKARGHRDEFVTMDMGFDAAAPAPEHQPGARASDCGAGPIGFAGTVRKEAVVKAAGLTTLAGDDFGGGPTMPMMPGTWTHDQGVFDEHR.

Disordered stretches follow at residues Ser179 to Gly203 and Ala433 to Glu459. Over residues Leu182–Glu192 the composition is skewed to acidic residues. Low complexity predominate over residues Ala433–Arg442. Positions Ala443 to Gly455 are enriched in basic residues.

Belongs to the mycobacterial PPE family.

It localises to the secreted. This is an uncharacterized protein from Mycobacterium tuberculosis (strain CDC 1551 / Oshkosh).